A 579-amino-acid polypeptide reads, in one-letter code: Thiol:disulfide interchange protein DsbD (579 aa).

Residues 1–16 (MKKLFLFFTLIFTAFA) form the signal peptide. 2 disulfides stabilise this stretch: Cys-124–Cys-129 and Cys-193–Cys-315. 8 helical membrane-spanning segments follow: residues 178-198 (IFGF…LPML), 230-250 (LTYT…QIAL), 254-274 (YVMI…FGLF), 296-316 (GAFG…SPCT), 337-357 (AATL…ITLF), 376-396 (FGFV…PEVW), 397-417 (EPRL…LQMS), and 420-440 (GFGY…VQPL). In terms of domain architecture, Thioredoxin spans 449-579 (TTTQSAVENK…AFSNWLKALH (131 aa)). The cysteines at positions 495 and 498 are disulfide-linked.

Belongs to the thioredoxin family. DsbD subfamily.

It is found in the cell inner membrane. It carries out the reaction [protein]-dithiol + NAD(+) = [protein]-disulfide + NADH + H(+). The enzyme catalyses [protein]-dithiol + NADP(+) = [protein]-disulfide + NADPH + H(+). Required to facilitate the formation of correct disulfide bonds in some periplasmic proteins and for the assembly of the periplasmic c-type cytochromes. Acts by transferring electrons from cytoplasmic thioredoxin to the periplasm. This transfer involves a cascade of disulfide bond formation and reduction steps. This is Thiol:disulfide interchange protein DsbD from Haemophilus influenzae (strain PittEE).